Consider the following 326-residue polypeptide: ATP synthase gamma chain (326 aa).

Belongs to the ATPase gamma chain family. F-type ATPases have 2 components, CF(1) - the catalytic core - and CF(0) - the membrane proton channel. CF(1) has five subunits: alpha(3), beta(3), gamma(1), delta(1), epsilon(1). CF(0) has three main subunits: a, b and c.

Its subcellular location is the cell membrane. Its function is as follows. Produces ATP from ADP in the presence of a proton gradient across the membrane. The gamma chain is believed to be important in regulating ATPase activity and the flow of protons through the CF(0) complex. This Corynebacterium efficiens (strain DSM 44549 / YS-314 / AJ 12310 / JCM 11189 / NBRC 100395) protein is ATP synthase gamma chain.